A 377-amino-acid polypeptide reads, in one-letter code: Nitric oxide reductase FlRd-NAD(+) reductase (377 aa).

It belongs to the FAD-dependent oxidoreductase family. It depends on FAD as a cofactor.

Its subcellular location is the cytoplasm. The enzyme catalyses 2 reduced [nitric oxide reductase rubredoxin domain] + NAD(+) + H(+) = 2 oxidized [nitric oxide reductase rubredoxin domain] + NADH. Its pathway is nitrogen metabolism; nitric oxide reduction. One of at least two accessory proteins for anaerobic nitric oxide (NO) reductase. Reduces the rubredoxin moiety of NO reductase. The protein is Nitric oxide reductase FlRd-NAD(+) reductase of Salmonella gallinarum (strain 287/91 / NCTC 13346).